Consider the following 261-residue polypeptide: Sulfur carrier protein FdhD (261 aa).

C105 functions as the Cysteine persulfide intermediate in the catalytic mechanism. 245 to 250 lines the Mo-bis(molybdopterin guanine dinucleotide) pocket; it reads FIRGDR.

This sequence belongs to the FdhD family.

Its subcellular location is the cytoplasm. Functionally, required for formate dehydrogenase (FDH) activity. Acts as a sulfur carrier protein that transfers sulfur from IscS to the molybdenum cofactor prior to its insertion into FDH. This chain is Sulfur carrier protein FdhD, found in Listeria monocytogenes serovar 1/2a (strain ATCC BAA-679 / EGD-e).